Consider the following 435-residue polypeptide: MVKSLAISLIALIIMKNLNVSIIGLSVLTILSMGAASVATGGVELNGLYSTDFVMGLMITLTLFVAILSYLSSAKVSRKASFNLMVISISLILVMSFSVSSFFLFFFFFESVLAPLLLLIVGWGYQPERLQAGGYMVIYTVFGSLFFLWGVSELYLSGMSSSMSSVGSLVKKSAMSLWWLYILGFLIKLPMYPFHLWLPKAHVEAPVAGSMLLAGVVLKLGGYGLLRFMLVMQVSLSSVFFVLLLSVNLAGGFYAGLACVRQVDLKCLVAYSSVAHMSLVLLGVLSNTLLGVMGAIIIMVGHGLCSSGLFSYVNAIYKMSHSRLLVMNKGGXLFCPVLVLMCFLLSSSNMAAPPSLNLFGEILVFGVGGXXSXAFLFILGLMSFISACFSLYLYGSCSHGKGLMHSESLNLSSLCDVFVLLSHWVPLNFLFMFMP.

The next 13 helical transmembrane spans lie at 27–47 (VLTILSMGAASVATGGVELNG), 53–73 (FVMGLMITLTLFVAILSYLSS), 80–100 (ASFNLMVISISLILVMSFSVS), 102–122 (FFLFFFFFESVLAPLLLLIVG), 132–152 (AGGYMVIYTVFGSLFFLWGVS), 177–197 (LWWLYILGFLIKLPMYPFHLW), 206–226 (PVAGSMLLAGVVLKLGGYGLL), 239–259 (VFFVLLLSVNLAGGFYAGLAC), 267–285 (CLVAYSSVAHMSLVLLGVL), 295–317 (AIIIMVGHGLCSSGLFSYVNAIY), 324–344 (LLVMNKGGXLFCPVLVLMCFL), 372–394 (SXAFLFILGLMSFISACFSLYLY), and 414–434 (LCDVFVLLSHWVPLNFLFMFM).

This sequence belongs to the complex I subunit 4 family.

The protein localises to the mitochondrion membrane. The enzyme catalyses a ubiquinone + NADH + 5 H(+)(in) = a ubiquinol + NAD(+) + 4 H(+)(out). Core subunit of the mitochondrial membrane respiratory chain NADH dehydrogenase (Complex I) that is believed to belong to the minimal assembly required for catalysis. Complex I functions in the transfer of electrons from NADH to the respiratory chain. The immediate electron acceptor for the enzyme is believed to be ubiquinone. The chain is NADH-ubiquinone oxidoreductase chain 4 (ND4) from Mytilus edulis (Blue mussel).